A 66-amino-acid chain; its full sequence is DNA-directed RNA polymerase subunit Rpo10 (66 aa).

Zn(2+) is bound by residues Cys-7, Cys-10, Cys-47, and Cys-48.

This sequence belongs to the archaeal Rpo10/eukaryotic RPB10 RNA polymerase subunit family. Part of the RNA polymerase complex. Zn(2+) serves as cofactor.

It localises to the cytoplasm. The catalysed reaction is RNA(n) + a ribonucleoside 5'-triphosphate = RNA(n+1) + diphosphate. Functionally, DNA-dependent RNA polymerase (RNAP) catalyzes the transcription of DNA into RNA using the four ribonucleoside triphosphates as substrates. The protein is DNA-directed RNA polymerase subunit Rpo10 of Halobacterium salinarum (strain ATCC 29341 / DSM 671 / R1).